Reading from the N-terminus, the 200-residue chain is ATP synthase subunit s, mitochondrial (200 aa).

Residues 1 to 25 constitute a mitochondrion transit peptide; that stretch reads MMMFGKISRQLCSLKKIPWSCDSRY. The N-terminal domain stretch occupies residues 1–61; that stretch reads MMMFGKISRQ…SEWLLRCGAK (61 aa). Residue glycine 59 coordinates Mg(2+). LRR repeat units lie at residues 62–87, 88–116, 117–141, and 142–173; these read VRYC…RYKI, QAID…KITL, CKCH…KSLL, and ELEI…LSDL. Residue threonine 93 participates in Mg(2+) binding.

The protein belongs to the ATP synthase subunit s family. In terms of assembly, homotetramer. Associates with ATP synthase.

It localises to the mitochondrion. The protein resides in the mitochondrion inner membrane. Involved in regulation of mitochondrial membrane ATP synthase. Necessary for H(+) conduction of ATP synthase. Facilitates energy-driven catalysis of ATP synthesis by blocking a proton leak through an alternative proton exit pathway. The polypeptide is ATP synthase subunit s, mitochondrial (Dmac2l) (Mus musculus (Mouse)).